The chain runs to 303 residues: MFKGLFICSLIAVICANALPQPEASADEDMDEREVRGIGKFLHSAGKFGKAFVGEIMKSKRDAEAVGPEAFADEDLDEREVRGIGKFLHSAKKFGKAFVGEIMNSKRDAEAVGPEAFADEDLDEREVRGIGKFLHSAKKFGKAFVGEIMNSKRDAEAVGPEAFADEDLDEREVRGIGKFLHSAKKFGKAFVGEIMNSKRDAEAVGPEAFADEDFDEREVRGIGKFLHSAKKFGKAFVGEIMNSKRDAEAVGPEAFADEDLDEREVRGIGKFLHSAKKFGKAFVGEIMNSKRDAEAVDDRRWVE.

The first 18 residues, 1-18 (MFKGLFICSLIAVICANA), serve as a signal peptide directing secretion. Propeptides lie at residues 19–26 (LPQPEASA), 33–36 (REVR), 62–72 (DAEAVGPEAFA), 79–82 (REVR), 108–118 (DAEAVGPEAFA), 125–128 (REVR), 154–164 (DAEAVGPEAFA), 171–174 (REVR), 200–210 (DAEAVGPEAFA), 217–220 (REVR), 246–256 (DAEAVGPEAFA), 263–266 (REVR), and 292–303 (DAEAVDDRRWVE).

This sequence belongs to the gastrin/cholecystokinin family. Magainin subfamily. Synthesized in the stomach and stored in a novel granular multinucleated cell in the gastric mucosa. It is stored as active, processed peptides in large granules within the granular gland secretions of the skin.

It localises to the secreted. In terms of biological role, antimicrobial peptides that inhibit the growth of numerous species of bacteria and fungi and induce osmotic lysis of protozoa. Rapidly inactivates channel catfish herpesvirus (ED(50)=48 uM) over a wide temperature range. Magainins are membrane lytic agents. The protein is Magainins (magainins) of Xenopus laevis (African clawed frog).